We begin with the raw amino-acid sequence, 326 residues long: Glyoxylate/hydroxypyruvate reductase B (326 aa).

Active-site residues include Arg-237 and Glu-266. Residue His-285 is the Proton donor of the active site.

It belongs to the D-isomer specific 2-hydroxyacid dehydrogenase family. GhrB subfamily. In terms of assembly, homodimer.

The protein localises to the cytoplasm. The enzyme catalyses glycolate + NADP(+) = glyoxylate + NADPH + H(+). It carries out the reaction (R)-glycerate + NAD(+) = 3-hydroxypyruvate + NADH + H(+). It catalyses the reaction (R)-glycerate + NADP(+) = 3-hydroxypyruvate + NADPH + H(+). Its function is as follows. Catalyzes the NADPH-dependent reduction of glyoxylate and hydroxypyruvate into glycolate and glycerate, respectively. This Yersinia pseudotuberculosis serotype O:1b (strain IP 31758) protein is Glyoxylate/hydroxypyruvate reductase B.